Consider the following 268-residue polypeptide: tRNA pseudouridine synthase A (268 aa).

Asp-52 serves as the catalytic Nucleophile. Tyr-113 is a substrate binding site.

It belongs to the tRNA pseudouridine synthase TruA family. As to quaternary structure, homodimer.

The enzyme catalyses uridine(38/39/40) in tRNA = pseudouridine(38/39/40) in tRNA. Its function is as follows. Formation of pseudouridine at positions 38, 39 and 40 in the anticodon stem and loop of transfer RNAs. In Chlamydia abortus (strain DSM 27085 / S26/3) (Chlamydophila abortus), this protein is tRNA pseudouridine synthase A.